Here is a 75-residue protein sequence, read N- to C-terminus: Guanine nucleotide-binding protein G(I)/G(S)/G(O) subunit gamma-3 (75 aa).

Phosphothreonine is present on Thr-5. Ser-9 carries the post-translational modification Phosphoserine. Thr-10 carries the post-translational modification Phosphothreonine. At Ser-12 the chain carries Phosphoserine. Cys-72 carries the post-translational modification Cysteine methyl ester. The S-geranylgeranyl cysteine moiety is linked to residue Cys-72. Positions 73-75 (ALL) are cleaved as a propeptide — removed in mature form.

It belongs to the G protein gamma family. As to quaternary structure, g proteins are composed of 3 units, alpha, beta and gamma. Forms a complex with GNAO1 and GNB1. Interacts with SCN8A. As to expression, abundantly expressed in brain. Low levels in testis.

The protein resides in the cell membrane. In terms of biological role, guanine nucleotide-binding proteins (G proteins) are involved as a modulator or transducer in various transmembrane signaling systems. The beta and gamma chains are required for the GTPase activity, for replacement of GDP by GTP, and for G protein-effector interaction. The protein is Guanine nucleotide-binding protein G(I)/G(S)/G(O) subunit gamma-3 (GNG3) of Bos taurus (Bovine).